A 594-amino-acid polypeptide reads, in one-letter code: ATP-dependent lipid A-core flippase (594 aa).

6 helical membrane-spanning segments follow: residues 35 to 55 (FVLAIIAMGLVAASEGIIPKV), 64 to 84 (FGGSYAGKLWHVPALLVGVAL), 135 to 155 (AVIFEVNQVMQILTGVLITLV), 161 to 181 (VVALLIYLFYTNWKLTLVVAV), 262 to 282 (VTAFLASLALSVILTIAMIQA), and 289 to 309 (IGGFTGFVMAMLLLISPLKHL). Residues 36 to 318 (VLAIIAMGLV…LADLNQPLQR (283 aa)) enclose the ABC transmembrane type-1 domain. Positions 350–588 (LVFDNVGFRY…NGLYAGLHRI (239 aa)) constitute an ABC transporter domain. Residue 384-391 (GPSGSGKT) participates in ATP binding.

The protein belongs to the ABC transporter superfamily. Lipid exporter (TC 3.A.1.106) family. As to quaternary structure, homodimer.

The protein resides in the cell inner membrane. It catalyses the reaction ATP + H2O + lipid A-core oligosaccharideSide 1 = ADP + phosphate + lipid A-core oligosaccharideSide 2.. Functionally, involved in lipopolysaccharide (LPS) biosynthesis. Translocates lipid A-core from the inner to the outer leaflet of the inner membrane. Transmembrane domains (TMD) form a pore in the inner membrane and the ATP-binding domain (NBD) is responsible for energy generation. This Cupriavidus metallidurans (strain ATCC 43123 / DSM 2839 / NBRC 102507 / CH34) (Ralstonia metallidurans) protein is ATP-dependent lipid A-core flippase.